We begin with the raw amino-acid sequence, 388 residues long: Succinate--CoA ligase [ADP-forming] subunit beta (388 aa).

The ATP-grasp domain maps to 9–244 (KEIFRSMGVA…LEEEDPKEIE (236 aa)). Residues Lys46, 53 to 55 (GRG), Glu99, Cys102, and Glu107 contribute to the ATP site. The Mg(2+) site is built by Asn199 and Asp213. Substrate-binding positions include Asn264 and 321–323 (GIM).

It belongs to the succinate/malate CoA ligase beta subunit family. Heterotetramer of two alpha and two beta subunits. Requires Mg(2+) as cofactor.

It carries out the reaction succinate + ATP + CoA = succinyl-CoA + ADP + phosphate. The catalysed reaction is GTP + succinate + CoA = succinyl-CoA + GDP + phosphate. It functions in the pathway carbohydrate metabolism; tricarboxylic acid cycle; succinate from succinyl-CoA (ligase route): step 1/1. Succinyl-CoA synthetase functions in the citric acid cycle (TCA), coupling the hydrolysis of succinyl-CoA to the synthesis of either ATP or GTP and thus represents the only step of substrate-level phosphorylation in the TCA. The beta subunit provides nucleotide specificity of the enzyme and binds the substrate succinate, while the binding sites for coenzyme A and phosphate are found in the alpha subunit. The protein is Succinate--CoA ligase [ADP-forming] subunit beta of Staphylococcus aureus (strain MRSA252).